Here is a 317-residue protein sequence, read N- to C-terminus: Melanocyte-stimulating hormone receptor (317 aa).

The Extracellular segment spans residues 1-37 (MPVQGSQRRLLGSLNSTPTATPHLGLAANQTGARCLE). Asn-29 carries N-linked (GlcNAc...) asparagine glycosylation. Residues 38–63 (VSIPDGLFLSLGLVSLVENVLVVTAI) traverse the membrane as a helical segment. The Cytoplasmic segment spans residues 64–72 (AKNRNLHSP). Residues 73–93 (MYCFICCLALSDLLVSGSNML) form a helical membrane-spanning segment. Residues 94–118 (ETAVILLLEAGALAARAAVVQQLDN) are Extracellular-facing. Residues 119-140 (VIDVITCSSMLSSLCFLGAIAV) form a helical membrane-spanning segment. Over 141–163 (DRYISIFYALRYHSIVTLPRARR) the chain is Cytoplasmic. The helical transmembrane segment at 164-183 (AVAAIWVASVLFSMLFIAYY) threads the bilayer. The Extracellular portion of the chain corresponds to 184 to 191 (DHAAVLLC). A helical membrane pass occupies residues 192–211 (LVVFFLAMLVLMAVLYVHML). Topologically, residues 212-240 (ARACQHAQGIARLHKRQRPAHQSFGLKGA) are cytoplasmic. A helical membrane pass occupies residues 241-266 (ATLTILLGIFFLCWGPFFLHLTLIVL). Topologically, residues 267–279 (CPQHPTCSCIFKN) are extracellular. Residues 280–300 (FNLFLTLIICNAIIDPLIYAF) traverse the membrane as a helical segment. Residues 301-317 (RSQELRRTLKEVLLCSW) are Cytoplasmic-facing. Residue Cys-315 is the site of S-palmitoyl cysteine attachment.

The protein belongs to the G-protein coupled receptor 1 family. As to quaternary structure, interacts with MGRN1, but does not undergo MGRN1-mediated ubiquitination; this interaction competes with GNAS-binding and thus inhibits agonist-induced cAMP production. Interacts with OPN3; the interaction results in a decrease in MC1R-mediated cAMP signaling and ultimately a decrease in melanin production in melanocytes.

Its subcellular location is the cell membrane. In terms of biological role, receptor for MSH (alpha, beta and gamma) and ACTH. The activity of this receptor is mediated by G proteins which activate adenylate cyclase. Mediates melanogenesis, the production of eumelanin (black/brown) and phaeomelanin (red/yellow), via regulation of cAMP signaling in melanocytes. The chain is Melanocyte-stimulating hormone receptor (MC1R) from Erythrocebus patas (Red guenon).